The primary structure comprises 374 residues: Pectate lyase 1 (374 aa).

A signal peptide spans 1–21 (MDSPCLVALLVFSFVIGSCFS). 2 disulfide bridges follow: C28–C45 and C128–C147. N158 carries an N-linked (GlcNAc...) asparagine glycan. D170 contacts Ca(2+). A glycan (N-linked (GlcNAc...) (complex) asparagine) is linked at N191. Positions 194 and 198 each coordinate Ca(2+). Residue R250 is part of the active site. N293 is a glycosylation site (N-linked (GlcNAc...) asparagine). A disulfide bond links C306 and C312. N354 carries an N-linked (GlcNAc...) (complex) asparagine glycan.

The protein belongs to the polysaccharide lyase 1 family. Amb a subfamily. Ca(2+) serves as cofactor. N-glycosylated; contains fucose and xylose.

The catalysed reaction is Eliminative cleavage of (1-&gt;4)-alpha-D-galacturonan to give oligosaccharides with 4-deoxy-alpha-D-galact-4-enuronosyl groups at their non-reducing ends.. It functions in the pathway glycan metabolism; pectin degradation; 2-dehydro-3-deoxy-D-gluconate from pectin: step 2/5. Functionally, has pectate lyase activity. In Cryptomeria japonica (Japanese cedar), this protein is Pectate lyase 1.